The primary structure comprises 180 residues: Cytidylate kinase (180 aa).

An ATP-binding site is contributed by 7–15; that stretch reads GLPGSGTTT.

Belongs to the cytidylate kinase family. Type 2 subfamily.

The protein localises to the cytoplasm. It carries out the reaction CMP + ATP = CDP + ADP. The catalysed reaction is dCMP + ATP = dCDP + ADP. This chain is Cytidylate kinase, found in Methanosarcina barkeri (strain Fusaro / DSM 804).